We begin with the raw amino-acid sequence, 247 residues long: Anionic trypsin (247 aa).

The first 15 residues, M1–A15, serve as a signal peptide directing secretion. Positions T16 to K23 are cleaved as a propeptide — activation peptide. Positions I24 to A244 constitute a Peptidase S1 domain. 6 cysteine pairs are disulfide-bonded: C30/C160, C48/C64, C132/C233, C139/C206, C171/C185, and C196/C220. The active-site Charge relay system is the H63. Residues E75, N77, V80, and E85 each contribute to the Ca(2+) site. The active-site Charge relay system is the D107. The active-site Charge relay system is S200.

Belongs to the peptidase S1 family. Ca(2+) is required as a cofactor.

It is found in the secreted. It localises to the extracellular space. It catalyses the reaction Preferential cleavage: Arg-|-Xaa, Lys-|-Xaa.. This chain is Anionic trypsin, found in Canis lupus familiaris (Dog).